The sequence spans 155 residues: Small ribosomal subunit protein uS7cz/uS7cy (155 aa).

Belongs to the universal ribosomal protein uS7 family. In terms of assembly, part of the 30S ribosomal subunit.

Its subcellular location is the plastid. Its function is as follows. One of the primary rRNA binding proteins, it binds directly to 16S rRNA where it nucleates assembly of the head domain of the 30S subunit. The chain is Small ribosomal subunit protein uS7cz/uS7cy (rps7-A) from Cuscuta exaltata (Tall dodder).